Consider the following 192-residue polypeptide: MGARDCTPLLMLSFLLFPLGFPVLGAPARLICDSRVLERYILEAREAENATMGCAEGCSFNENITVPDTKVNFYAWKRMEVQQQALEVWQGLALLSEAILRGQALLANASQPCEALRLHVDKAVSGLRSLTSLLRALGAQKEAISLPDATPSAAPLRAFTVDALSKLFRIYSNFLRGKLTLYTGEACRRGDR.

Residues methionine 1–glycine 25 form the signal peptide. Disulfide bonds link cysteine 32–cysteine 187 and cysteine 54–cysteine 58. The N-linked (GlcNAc...) asparagine glycan is linked to asparagine 49. 2 N-linked (GlcNAc...) asparagine glycosylation sites follow: asparagine 63 and asparagine 108.

This sequence belongs to the EPO/TPO family. As to expression, produced by kidney or liver of adult mammals and by liver of fetal or neonatal mammals.

Its subcellular location is the secreted. Hormone involved in the regulation of erythrocyte proliferation and differentiation and the maintenance of a physiological level of circulating erythrocyte mass. Binds to EPOR leading to EPOR dimerization and JAK2 activation thereby activating specific downstream effectors, including STAT1 and STAT3. The protein is Erythropoietin (EPO) of Bos taurus (Bovine).